The primary structure comprises 531 residues: MAPADFPASLPLCVCLLLASGLAQAGRLLVVPMDGSHWFTMQTVVEKLLHKGHEVVVVVPEVSWQLTKPLNFVVKTYAVSHTQEDLNREFKIFIDAQWKSQQEGGILPLLDSPAKGFFELLFSHCRSLFNDKKLVEYLKQTSFDAVFLDPFDVCGLTVAKYFSLPSVVFSRGIFCHYLEDAAQCPSPPSYIPRMLLKFTDTMTFKERTRNLLAYMGERAFCHKFFKSAADIASEVLQTPVTMTDLFSPVSIWLLRTDFVLEFPRPVMPNVIYIGGINCHQGKPLSKEFEAYVNASGEHGIVVFSLGSMVSEIPEKKAMEIAEALGRIPQTVLWRYTGTRPSNLAKNTILVKWLPQNDLLGHPKTRAFITHSGSHGIYEGICNGVPMVMMPLFGDQMDNAKRMETRGAGVTLNVLEMTADDLENALKTVINNKSYKENIMRLSSLHKDRPIEPLDLAVFWVEYVMRHKGAPHLRPAAHDLTWYQYHSLDVIGFLLAIVLTVVFIVFKCCAYGCRKCFGGKGRVKKSHKSKTH.

The first 25 residues, 1–25 (MAPADFPASLPLCVCLLLASGLAQA), serve as a signal peptide directing secretion. N-linked (GlcNAc...) asparagine glycosylation is found at Asn293 and Asn431. A helical membrane pass occupies residues 489 to 509 (VIGFLLAIVLTVVFIVFKCCA).

Belongs to the UDP-glycosyltransferase family. In terms of assembly, homodimer. Homooligomer. Interacts with UGT1A1, UGT1A3, UGT1A4, UGT1A6, UGT1A8, UGT1A9 and UGT1A10 to form heterodimers. Widely expressed with highest levels detected in colon and kidney.

The protein localises to the endoplasmic reticulum membrane. It carries out the reaction glucuronate acceptor + UDP-alpha-D-glucuronate = acceptor beta-D-glucuronoside + UDP + H(+). The catalysed reaction is 17alpha-estradiol + UDP-alpha-D-glucuronate = 17alpha-estradiol 3-O-(beta-D-glucuronate) + UDP + H(+). The enzyme catalyses prunetin + UDP-alpha-D-glucuronate = prunetin-5-O-beta-D-glucuronide + UDP. It catalyses the reaction 5-epi-5-F2t-IsoP + UDP-alpha-D-glucuronate = 5-epi-5-F2t-IsoP-glucuronide + UDP + H(+). It carries out the reaction (E)-ferulate + UDP-alpha-D-glucuronate = (E)-ferulic acid beta-D-glucuronate ester + UDP. The catalysed reaction is candesartan + UDP-alpha-D-glucuronate = candesartan O-beta-D-glucuronoside + UDP. The enzyme catalyses SN-38 + UDP-alpha-D-glucuronate = SN-38 O-beta-D-glucuronide + UDP + H(+). It catalyses the reaction mycophenolate + UDP-alpha-D-glucuronate = mycophenolate 7-O-beta-D-glucuronide + UDP + H(+). In terms of biological role, UDP-glucuronosyltransferase (UGT) that catalyzes phase II biotransformation reactions in which lipophilic substrates are conjugated with glucuronic acid to increase the metabolite's water solubility, thereby facilitating excretion into either the urine or bile. Essential for the elimination and detoxification of drugs, xenobiotics and endogenous compounds. Catalyzes the glucuronidation of endogenous estrogen hormone epiestradiol. Involved in the glucuronidation of F2-isoprostane (5-epi-5-F2t-IsoP). Involved in the glucuronidation of the phytochemical ferulic acid at the carboxylic acid group. Also catalyzes the glucuronidation of the isoflavones genistein, daidzein, glycitein, formononetin, biochanin A and prunetin, which are phytoestrogens with anticancer and cardiovascular properties. Involved in the glucuronidation of the AGTR1 angiotensin receptor antagonist caderastan, a drug which can inhibit the effect of angiotensin II. Involved in the biotransformation of 7-ethyl-10-hydroxycamptothecin (SN-38), the pharmacologically active metabolite of the anticancer drug irinotecan. Also metabolizes mycophenolate, an immunosuppressive agent. The protein is UDP-glucuronosyltransferase 1A7 of Mus musculus (Mouse).